Consider the following 261-residue polypeptide: Transmembrane protein 187 (261 aa).

6 helical membrane-spanning segments follow: residues 8–28, 43–63, 88–108, 113–133, 140–162, and 190–210; these read AFVHVAVAGGLCAVAVFTGIF, APVAGLPAFLAMPFNSLVNMA, VFAAMALLYGPVQWLRLWTQW, VLDQWLTLPIFAWPVAWCLYL, WLFLSLECVSLASYGLALLHPQG, and SATYLALGVLSCLGFVVLKLC.

As to expression, ubiquitous.

The protein resides in the membrane. This Homo sapiens (Human) protein is Transmembrane protein 187 (TMEM187).